We begin with the raw amino-acid sequence, 321 residues long: Protein stand still (321 aa).

Coiled coils occupy residues 74-103 and 147-167; these read KLHE…RKKA and KQEQ…KANL. Basic and acidic residues predominate over residues 146–162; it reads HKQEQEGATRKLEDSTS. 2 disordered regions span residues 146–166 and 227–248; these read HKQE…DKAN and QVPP…MEDV. Residues 235-244 are compositionally biased toward low complexity; the sequence is SKSSGSLASS. The stretch at 272 to 292 forms a coiled coil; sequence QRDVLQRLERSMAQISQELHC.

Germ cells specific. Expressed in all germ cells. During the first instar larvae, it is expressed in all germ cells of both sexes. In third instar larvae, it decreases in male germ cells while it remains in female germ cells. In adult ovary, it is expressed in cells of the germarium, including the stem cells. In the early previtellogenic stages, it is highly expressed in the nurse cells. During vitellogenesis, it is not translocated into the maturing egg. In testes, it is only expressed during some steps of male germline differentiation. At the apex testis, it is expressed at low level in stem cells and dividing spermatogonia, while in newly formed 16-cell cysts of primary spermatocytes, it is transiently but strongly expressed before vanishing during spermatocyte growth phase.

The protein localises to the nucleus. Functionally, essential in the female germline for proper survival, sex determination and differentiation. Participates in the transcriptional activation of Otu. Does not regulate the expression of Ovo. This chain is Protein stand still (stil), found in Drosophila melanogaster (Fruit fly).